A 438-amino-acid polypeptide reads, in one-letter code: GTPase Der (438 aa).

EngA-type G domains follow at residues 4 to 168 (PIVA…NDPS) and 177 to 352 (IRIA…DNYS). Residues 10–17 (GRPNVGKS), 57–61 (DTGGI), 120–123 (NKID), 183–190 (GKPNVGKS), 230–234 (DTAGL), and 295–298 (NKWD) contribute to the GTP site. The region spanning 353-437 (KRVSTGLLND…GIEIEYRARK (85 aa)) is the KH-like domain.

The protein belongs to the TRAFAC class TrmE-Era-EngA-EngB-Septin-like GTPase superfamily. EngA (Der) GTPase family. In terms of assembly, associates with the 50S ribosomal subunit.

Functionally, GTPase that plays an essential role in the late steps of ribosome biogenesis. The chain is GTPase Der from Clostridium perfringens (strain ATCC 13124 / DSM 756 / JCM 1290 / NCIMB 6125 / NCTC 8237 / Type A).